A 252-amino-acid chain; its full sequence is 5-oxoprolinase subunit A (252 aa).

It belongs to the LamB/PxpA family. As to quaternary structure, forms a complex composed of PxpA, PxpB and PxpC.

It catalyses the reaction 5-oxo-L-proline + ATP + 2 H2O = L-glutamate + ADP + phosphate + H(+). In terms of biological role, catalyzes the cleavage of 5-oxoproline to form L-glutamate coupled to the hydrolysis of ATP to ADP and inorganic phosphate. This Mycobacterium leprae (strain Br4923) protein is 5-oxoprolinase subunit A.